We begin with the raw amino-acid sequence, 492 residues long: Cytochrome P450 monooxygenase MYCFIDRAFT_204672 (492 aa).

The N-linked (GlcNAc...) asparagine glycan is linked to asparagine 116. The chain crosses the membrane as a helical span at residues 269 to 293; sequence FLISMIFISAANGCVVSGAMLYSIA. N-linked (GlcNAc...) asparagine glycosylation is present at asparagine 335. Heme is bound at residue cysteine 430.

It belongs to the cytochrome P450 family. The cofactor is heme.

It localises to the membrane. It participates in secondary metabolite biosynthesis. Its function is as follows. Cytochrome P450 monooxygenase; part of the gene cluster that mediates the biosynthesis of an emodin derivative that may be involved in black Sigatoka disease of banana. The pathway begins with the synthesis of atrochrysone thioester by the polyketide synthase PKS8-1. The atrochrysone carboxyl ACP thioesterase MYCFIDRAFT_190111 then breaks the thioester bond and releases the atrochrysone carboxylic acid from PKS8-1. The decarboxylase MYCFIDRAFT_34057 then catalyzes the concerted decarboxylation-elimination required to convert atochrysone carboxylic acid into emodin anthrone, which is further oxidized to emodin by the anthrone oxygenase MYCFIDRAFT_34418. The functions of the other tailoring enzymes as well as the final product of the cluster have still to be identified. This is Cytochrome P450 monooxygenase MYCFIDRAFT_204672 from Pseudocercospora fijiensis (strain CIRAD86) (Black leaf streak disease fungus).